We begin with the raw amino-acid sequence, 938 residues long: Isoleucine--tRNA ligase (938 aa).

The 'HIGH' region signature appears at 58–68 (PYANGSIHIGH). Position 183 is an N6-acetyllysine (lysine 183). Position 561 (glutamate 561) interacts with L-isoleucyl-5'-AMP. The 'KMSKS' region signature appears at 602–606 (KMSKS). Lysine 605 is an ATP binding site. Residues cysteine 901, cysteine 904, cysteine 921, and cysteine 924 each coordinate Zn(2+).

This sequence belongs to the class-I aminoacyl-tRNA synthetase family. IleS type 1 subfamily. Monomer. The cofactor is Zn(2+).

The protein localises to the cytoplasm. It carries out the reaction tRNA(Ile) + L-isoleucine + ATP = L-isoleucyl-tRNA(Ile) + AMP + diphosphate. Its function is as follows. Catalyzes the attachment of isoleucine to tRNA(Ile). As IleRS can inadvertently accommodate and process structurally similar amino acids such as valine, to avoid such errors it has two additional distinct tRNA(Ile)-dependent editing activities. One activity is designated as 'pretransfer' editing and involves the hydrolysis of activated Val-AMP. The other activity is designated 'posttransfer' editing and involves deacylation of mischarged Val-tRNA(Ile). This is Isoleucine--tRNA ligase from Shigella dysenteriae serotype 1 (strain Sd197).